The sequence spans 76 residues: Sec-independent protein translocase protein TatA (76 aa).

The chain crosses the membrane as a helical span at residues 1–21 (MGGISIWQLLIIALIVVLLFG). Positions 43 to 76 (MSSEDEKKAIEDTSAEKTAQTEEKKTESKDKEQA) are disordered. Residues 46–76 (EDEKKAIEDTSAEKTAQTEEKKTESKDKEQA) show a composition bias toward basic and acidic residues.

Belongs to the TatA/E family. In terms of assembly, the Tat system comprises two distinct complexes: a TatABC complex, containing multiple copies of TatA, TatB and TatC subunits, and a separate TatA complex, containing only TatA subunits. Substrates initially bind to the TatABC complex, which probably triggers association of the separate TatA complex to form the active translocon.

The protein localises to the cell inner membrane. Part of the twin-arginine translocation (Tat) system that transports large folded proteins containing a characteristic twin-arginine motif in their signal peptide across membranes. TatA could form the protein-conducting channel of the Tat system. The sequence is that of Sec-independent protein translocase protein TatA from Shewanella loihica (strain ATCC BAA-1088 / PV-4).